A 310-amino-acid polypeptide reads, in one-letter code: Homoserine kinase (310 aa).

Residue 91–101 (PIGSGLGSSAC) participates in ATP binding.

This sequence belongs to the GHMP kinase family. Homoserine kinase subfamily.

Its subcellular location is the cytoplasm. The catalysed reaction is L-homoserine + ATP = O-phospho-L-homoserine + ADP + H(+). The protein operates within amino-acid biosynthesis; L-threonine biosynthesis; L-threonine from L-aspartate: step 4/5. In terms of biological role, catalyzes the ATP-dependent phosphorylation of L-homoserine to L-homoserine phosphate. This chain is Homoserine kinase, found in Escherichia coli O6:K15:H31 (strain 536 / UPEC).